Consider the following 149-residue polypeptide: Lipoprotein signal peptidase (149 aa).

2 helical membrane passes run 58 to 78 (WFFIAITAVVVIGIVISLIRL) and 85 to 105 (ASLALSFVLGGAVGNFIDRAM). Residues Asp111 and Asp127 contribute to the active site. Residues 122 to 142 (IFNVADMAITIGVGILLLDVF) traverse the membrane as a helical segment.

The protein belongs to the peptidase A8 family.

Its subcellular location is the cell membrane. It catalyses the reaction Release of signal peptides from bacterial membrane prolipoproteins. Hydrolyzes -Xaa-Yaa-Zaa-|-(S,diacylglyceryl)Cys-, in which Xaa is hydrophobic (preferably Leu), and Yaa (Ala or Ser) and Zaa (Gly or Ala) have small, neutral side chains.. The protein operates within protein modification; lipoprotein biosynthesis (signal peptide cleavage). Functionally, this protein specifically catalyzes the removal of signal peptides from prolipoproteins. The chain is Lipoprotein signal peptidase from Brevibacillus brevis (strain 47 / JCM 6285 / NBRC 100599).